The primary structure comprises 111 residues: Protein EARLY FLOWERING 4 (111 aa).

Residues 1-26 (MKRNGETKRRRNVAEEAEQGEDPAMW) form a disordered region. Phosphoserine is present on Ser45. A disordered region spans residues 90-111 (FSSGFHGGKNGHDGGGAAGTRA). Over residues 94 to 111 (FHGGKNGHDGGGAAGTRA) the composition is skewed to gly residues.

The protein belongs to the EARLY FLOWERING 4 family. In terms of assembly, homodimer. Interacts with ELF3.

The protein localises to the nucleus. Its function is as follows. Component of the central CCA1/LHY-TOC1 feedback loop in the circadian clock that promotes clock accuracy and is required for sustained rhythms in the absence of daily light/dark cycles. Part of a corepressor complex consisting of ELF4, ELF3, and LUX involved in the transcriptional regulation of APRR9. Increases ELF3 nuclear distribution and localization in nuclear bodies. Required for responsiveness to continuous red, by regulating phytochrome B (phyB) signaling (including during seedling de-etiolation) and gene expression. Mediates both entrainment to an environmental cycle and circadian rhythm sustainability under constant conditions. Controls flowering time. Necessary for light-induced expression of both CCA1 and LHY. The protein is Protein EARLY FLOWERING 4 (ELF4) of Arabidopsis thaliana (Mouse-ear cress).